A 158-amino-acid chain; its full sequence is Protein-export protein SecB (158 aa).

The protein belongs to the SecB family. As to quaternary structure, homotetramer, a dimer of dimers. One homotetramer interacts with 1 SecA dimer.

It localises to the cytoplasm. In terms of biological role, one of the proteins required for the normal export of preproteins out of the cell cytoplasm. It is a molecular chaperone that binds to a subset of precursor proteins, maintaining them in a translocation-competent state. It also specifically binds to its receptor SecA. This Rhodopseudomonas palustris (strain HaA2) protein is Protein-export protein SecB.